A 454-amino-acid chain; its full sequence is Anthocyanidin 3-O-galactosyltransferase 3GT6 (454 aa).

The N-terminal stretch at M1–A21 is a signal peptide. An anthocyanidin contacts are provided by S18 and H20. The active-site Proton acceptor is H20. Catalysis depends on D117, which acts as the Charge relay. H148 is an an anthocyanidin binding site. A331, Q333, H348, W351, N352, S353, and E356 together coordinate UDP-alpha-D-glucose. G371 provides a ligand contact to an anthocyanidin. D372 serves as a coordination point for UDP-alpha-D-glucose. A glycan (N-linked (GlcNAc...) asparagine) is linked at N441.

The protein belongs to the UDP-glycosyltransferase family. In terms of assembly, monomer. Mostly expressed in leaves and flowers and, to a lower extent, in roots. In flowers, mainly observed in petals, stamens and scapes, and at lower levels in pistils and toruses.

The catalysed reaction is cyanidin + UDP-alpha-D-galactose = cyanidin 3-O-beta-D-galactoside + UDP + H(+). It carries out the reaction cyanidin + UDP-alpha-D-glucose = cyanidin 3-O-beta-D-glucoside + UDP + H(+). The enzyme catalyses delphinidin + UDP-alpha-D-glucose = delphinidin 3-O-beta-D-glucoside + UDP. It catalyses the reaction peonidin + UDP-alpha-D-glucose = peonidin 3-O-beta-D-glucoside + UDP. The catalysed reaction is pelargonidin + UDP-alpha-D-glucose = pelargonidin 3-O-beta-D-glucoside + UDP. It carries out the reaction delphinidin + UDP-alpha-D-galactose = delphinidin 3-O-beta-D-galactoside + UDP + H(+). The enzyme catalyses pelargonidin + UDP-alpha-D-galactose = pelargonidin 3-O-beta-D-galactoside betaine + UDP. It catalyses the reaction peonidin + UDP-alpha-D-galactose = peonidin 3-O-beta-D-galactoside + UDP. The catalysed reaction is petunidin + UDP-alpha-D-galactose = petunidin 3-O-beta-D-galactoside + UDP. It carries out the reaction petunidin + UDP-alpha-D-glucose = petunidin 3-O-beta-D-glucoside + UDP. The enzyme catalyses an anthocyanidin + UDP-alpha-D-glucose + H(+) = an anthocyanidin 3-O-beta-D-glucoside + UDP. It catalyses the reaction an anthocyanidin + UDP-alpha-D-galactose = an anthocyanidin 3-O-beta-D-galactoside + UDP. It participates in pigment biosynthesis; anthocyanin biosynthesis. Functionally, flavonoid 3-O-glycosyltransferase involved in the biosynthesis of anthocyanins conferring flower red/pink colors, mainly anthocyanidin 3-O-glycosides. Catalyzes the addition of UDP-sugar to the 3-OH of anthocyanidin, with a preference for UDP-galactose (UDP-Gal) as sugar donor and cyanidin as substrate; able to use delphinidin, pelargonidin, peonidin and petunidin as substrates in the presence of UDP-Gal, but barely active on malvidin. Can also use UDP-glucose (UDP-Glu) as sugar donor with cyanidin, delphinidin, pelargonidin, peonidin and petunidin as substrates, but not active on malvidin. The chain is Anthocyanidin 3-O-galactosyltransferase 3GT6 from Rhododendron delavayi (Rhododendron).